Reading from the N-terminus, the 392-residue chain is MEERTRAYLRGRFGDHYRQASVTPPPAANEREWGFIPWTEGPGETMVRHRSLLDLGEIEDFLGRRKPRHVYFSAGRYDEPSASTMSDKGWRSSDLVFDLDADHLPSVVLGEDSYAEMLAKCKDALRRLLDFLEDDFGFDDLTIVFSGGRGYHVHVRDERIRHLERDARREVVDYVRGIGLEFDELVDEESVAGTAGRSSPAQKRTLSTEGGWSARAHRHMLAVVDDLLAMEEADALEQLQEYDGIGEGKATAALNAARSNYEQLEAGNIDVHPAFYQLAKILLHEVVAADNAPIDEPVTTDTNRLIRLPGSLHGGSGLEVQRIDRDDLDAFDPLVDPVPETFRGHDITVEVTDGGLVELDGDSFTLEAGNQTVPEHVGVFLMARGRAEKGKE.

Active-site residues include Asp-98, Asp-100, and Asp-295.

This sequence belongs to the eukaryotic-type primase small subunit family. In terms of assembly, heterodimer of a small subunit (PriS) and a large subunit (PriL). It depends on Mg(2+) as a cofactor. Mn(2+) serves as cofactor.

Functionally, catalytic subunit of DNA primase, an RNA polymerase that catalyzes the synthesis of short RNA molecules used as primers for DNA polymerase during DNA replication. The small subunit contains the primase catalytic core and has DNA synthesis activity on its own. Binding to the large subunit stabilizes and modulates the activity, increasing the rate of DNA synthesis while decreasing the length of the DNA fragments, and conferring RNA synthesis capability. The DNA polymerase activity may enable DNA primase to also catalyze primer extension after primer synthesis. May also play a role in DNA repair. The polypeptide is DNA primase small subunit PriS (Haloarcula marismortui (strain ATCC 43049 / DSM 3752 / JCM 8966 / VKM B-1809) (Halobacterium marismortui)).